The chain runs to 173 residues: Shikimate kinase 1 (173 aa).

An ATP-binding site is contributed by 14 to 19; that stretch reads GAGKST. S18 contributes to the Mg(2+) binding site. Substrate-binding residues include D36, R60, and G82. R120 is a binding site for ATP. Residue R140 coordinates substrate. Q157 lines the ATP pocket.

Belongs to the shikimate kinase family. As to quaternary structure, monomer. Mg(2+) is required as a cofactor.

The protein localises to the cytoplasm. It carries out the reaction shikimate + ATP = 3-phosphoshikimate + ADP + H(+). It participates in metabolic intermediate biosynthesis; chorismate biosynthesis; chorismate from D-erythrose 4-phosphate and phosphoenolpyruvate: step 5/7. Functionally, catalyzes the specific phosphorylation of the 3-hydroxyl group of shikimic acid using ATP as a cosubstrate. This chain is Shikimate kinase 1, found in Pectobacterium atrosepticum (strain SCRI 1043 / ATCC BAA-672) (Erwinia carotovora subsp. atroseptica).